A 124-amino-acid polypeptide reads, in one-letter code: Small ribosomal subunit protein bS6 (124 aa).

The disordered stretch occupies residues 100–124 (KERRAARQKTGETQENVSQEESSTN). Over residues 110-124 (GETQENVSQEESSTN) the composition is skewed to polar residues.

Belongs to the bacterial ribosomal protein bS6 family.

Its function is as follows. Binds together with bS18 to 16S ribosomal RNA. This is Small ribosomal subunit protein bS6 from Fervidobacterium nodosum (strain ATCC 35602 / DSM 5306 / Rt17-B1).